Here is a 545-residue protein sequence, read N- to C-terminus: CTP synthase (545 aa).

The segment at 1-266 (MTTNYIFVTG…DDYICKRFSL (266 aa)) is amidoligase domain. Serine 14 is a binding site for CTP. Serine 14 provides a ligand contact to UTP. Residues 15–20 (SLGKGI) and aspartate 72 each bind ATP. Residues aspartate 72 and glutamate 140 each coordinate Mg(2+). CTP-binding positions include 147 to 149 (DIE), 187 to 192 (KTKPTQ), and lysine 223. UTP-binding positions include 187-192 (KTKPTQ) and lysine 223. 239–241 (KDV) contacts ATP. One can recognise a Glutamine amidotransferase type-1 domain in the interval 291 to 542 (TIGMVGKYIE…VKAASEFQKR (252 aa)). Residue glycine 352 participates in L-glutamine binding. Catalysis depends on cysteine 379, which acts as the Nucleophile; for glutamine hydrolysis. L-glutamine is bound by residues 380–383 (LGMQ), glutamate 403, and arginine 470. Catalysis depends on residues histidine 515 and glutamate 517.

Belongs to the CTP synthase family. As to quaternary structure, homotetramer.

It catalyses the reaction UTP + L-glutamine + ATP + H2O = CTP + L-glutamate + ADP + phosphate + 2 H(+). It carries out the reaction L-glutamine + H2O = L-glutamate + NH4(+). The enzyme catalyses UTP + NH4(+) + ATP = CTP + ADP + phosphate + 2 H(+). It functions in the pathway pyrimidine metabolism; CTP biosynthesis via de novo pathway; CTP from UDP: step 2/2. With respect to regulation, allosterically activated by GTP, when glutamine is the substrate; GTP has no effect on the reaction when ammonia is the substrate. The allosteric effector GTP functions by stabilizing the protein conformation that binds the tetrahedral intermediate(s) formed during glutamine hydrolysis. Inhibited by the product CTP, via allosteric rather than competitive inhibition. Functionally, catalyzes the ATP-dependent amination of UTP to CTP with either L-glutamine or ammonia as the source of nitrogen. Regulates intracellular CTP levels through interactions with the four ribonucleotide triphosphates. This is CTP synthase from Shigella boydii serotype 18 (strain CDC 3083-94 / BS512).